An 860-amino-acid chain; its full sequence is Leucine--tRNA ligase (860 aa).

The 'HIGH' region motif lies at 42–52 (PYPSGRLHMGH). Residues 619 to 623 (KMSKS) carry the 'KMSKS' region motif. Lysine 622 contributes to the ATP binding site.

It belongs to the class-I aminoacyl-tRNA synthetase family.

It is found in the cytoplasm. It catalyses the reaction tRNA(Leu) + L-leucine + ATP = L-leucyl-tRNA(Leu) + AMP + diphosphate. The sequence is that of Leucine--tRNA ligase from Edwardsiella ictaluri (strain 93-146).